The sequence spans 319 residues: tRNA N6-adenosine threonylcarbamoyltransferase (319 aa).

2 residues coordinate Fe cation: His-110 and His-114. Residues 132–136 (VVSGG), Asp-165, Gly-178, Asp-182, and Asn-271 contribute to the substrate site. Asp-300 serves as a coordination point for Fe cation.

This sequence belongs to the KAE1 / TsaD family. Fe(2+) serves as cofactor.

The protein localises to the cytoplasm. The catalysed reaction is L-threonylcarbamoyladenylate + adenosine(37) in tRNA = N(6)-L-threonylcarbamoyladenosine(37) in tRNA + AMP + H(+). Required for the formation of a threonylcarbamoyl group on adenosine at position 37 (t(6)A37) in tRNAs that read codons beginning with adenine. Is involved in the transfer of the threonylcarbamoyl moiety of threonylcarbamoyl-AMP (TC-AMP) to the N6 group of A37, together with TsaE and TsaB. TsaD likely plays a direct catalytic role in this reaction. The polypeptide is tRNA N6-adenosine threonylcarbamoyltransferase (Mycoplasma capricolum subsp. capricolum (strain California kid / ATCC 27343 / NCTC 10154)).